A 482-amino-acid chain; its full sequence is Wax ester synthase/diacylglycerol acyltransferase 9 (482 aa).

Topologically, residues Met-1–Thr-195 are cytoplasmic. Residue His-140 is the Proton acceptor of the active site. The chain crosses the membrane as a helical span at residues Val-196–Leu-216. At Lys-217–Asn-328 the chain is on the lumenal side. Residues Tyr-329–Leu-349 form a helical membrane-spanning segment. Over Ser-350–Tyr-366 the chain is Cytoplasmic. The helical transmembrane segment at Ile-367 to Phe-387 threads the bilayer. Residues Gln-388 to Asn-482 lie on the Lumenal side of the membrane. Asn-394 carries N-linked (GlcNAc...) asparagine glycosylation.

The protein in the N-terminal section; belongs to the long-chain O-acyltransferase family. In terms of tissue distribution, mostly expressed in stems and siliques.

The protein localises to the cell membrane. It localises to the endoplasmic reticulum membrane. It carries out the reaction an acyl-CoA + a 1,2-diacyl-sn-glycerol = a triacyl-sn-glycerol + CoA. The catalysed reaction is a long chain fatty alcohol + a fatty acyl-CoA = a wax ester + CoA. It functions in the pathway glycerolipid metabolism; triacylglycerol biosynthesis. It participates in lipid metabolism. Bifunctional wax ester synthase/diacylglycerol acyltransferase. Involved in cuticular wax biosynthesis. This chain is Wax ester synthase/diacylglycerol acyltransferase 9, found in Arabidopsis thaliana (Mouse-ear cress).